Reading from the N-terminus, the 497-residue chain is Cytoplasmic dynein 1 light intermediate chain 2 (497 aa).

61-68 contacts ATP; sequence GEDGSGKT. 4 disordered regions span residues 187–206, 366–408, 423–461, and 474–497; these read PEEG…SGSD, QQES…IKNN, LSKK…TEQC, and QEEL…ENEA. A phosphoserine mark is found at Ser-194, Ser-369, and Ser-377. Arg-383 is modified (omega-N-methylarginine). Positions 423–444 are enriched in polar residues; the sequence is LSKKTGSPGSPSAGGVQSTAKK. The residue at position 427 (Thr-427) is a Phosphothreonine. 2 positions are modified to phosphoserine: Ser-429 and Ser-432. A compositionally biased stretch (basic and acidic residues) spans 476–485; the sequence is ELDRMTRKPD. The span at 487–497 shows a compositional bias: polar residues; it reads MVTNSSTENEA.

This sequence belongs to the dynein light intermediate chain family. Homodimer. The cytoplasmic dynein 1 complex consists of two catalytic heavy chains (HCs) and a number of non-catalytic subunits presented by intermediate chains (ICs), light intermediate chains (LICs) and light chains (LCs); the composition seems to vary in respect to the IC, LIC and LC composition. The heavy chain homodimer serves as a scaffold for the probable homodimeric assembly of the respective non-catalytic subunits. The ICs and LICs bind directly to the HC dimer and the LCs assemble on the IC dimer. Self-associates. Interacts with DYNC1H1; DYNC1LI1 and DYNC1LI2 bind mutually exclusive to DYNC1H1. Ubiquitous.

The protein localises to the cytoplasm. It localises to the cytoskeleton. In terms of biological role, acts as one of several non-catalytic accessory components of the cytoplasmic dynein 1 complex that are thought to be involved in linking dynein to cargos and to adapter proteins that regulate dynein function. Cytoplasmic dynein 1 acts as a motor for the intracellular retrograde motility of vesicles and organelles along microtubules. May play a role in binding dynein to membranous organelles or chromosomes. The chain is Cytoplasmic dynein 1 light intermediate chain 2 (Dync1li2) from Rattus norvegicus (Rat).